We begin with the raw amino-acid sequence, 308 residues long: uncharacterized protein (308 aa).

Transmembrane regions (helical) follow at residues 45 to 65 (LGLA…KIAL), 69 to 89 (SPFA…LPFL), 100 to 120 (IGIA…YTTA), 122 to 142 (NAGF…WLVY), 151 to 171 (VSGV…SGFN), 172 to 192 (IGDI…AMIS), 201 to 221 (TMLA…FAVF), 226 to 246 (FEIN…ATFV), 263 to 283 (AAVI…AVLA), and 285 to 305 (ILTP…IIVS). EamA domains are found at residues 52–166 (LIWG…FLSG) and 178–306 (LFCA…IVSL).

Belongs to the EamA transporter family.

The protein resides in the cell membrane. This is an uncharacterized protein from Archaeoglobus fulgidus (strain ATCC 49558 / DSM 4304 / JCM 9628 / NBRC 100126 / VC-16).